We begin with the raw amino-acid sequence, 214 residues long: Putative 3-methyladenine DNA glycosylase (214 aa).

Belongs to the DNA glycosylase MPG family.

This is Putative 3-methyladenine DNA glycosylase from Mycobacterium leprae (strain Br4923).